The sequence spans 207 residues: MARYLGPKAKLSRREGTDLFLKSARRSIADKAKFDSKPGQHGRTSGARTSDYGLQLREKQKVKRMYGVLEKQFRRYFEAAERLKGNTGANLLGLLECRLDNVVYRMGFGSTRAEARQLVSHKAITVNGQSVNIASYLVKAGDVVAVRDKSKKQARIVEALQLAQQVGMPVWVEVNADKVEGTFKKVPDRDEFGADINESLIVELYSR.

A disordered region spans residues 31-52 (KAKFDSKPGQHGRTSGARTSDY). In terms of domain architecture, S4 RNA-binding spans 97 to 157 (CRLDNVVYRM…DKSKKQARIV (61 aa)).

The protein belongs to the universal ribosomal protein uS4 family. As to quaternary structure, part of the 30S ribosomal subunit. Contacts protein S5. The interaction surface between S4 and S5 is involved in control of translational fidelity.

Functionally, one of the primary rRNA binding proteins, it binds directly to 16S rRNA where it nucleates assembly of the body of the 30S subunit. Its function is as follows. With S5 and S12 plays an important role in translational accuracy. The polypeptide is Small ribosomal subunit protein uS4 (Acidovorax sp. (strain JS42)).